A 256-amino-acid chain; its full sequence is Trans-aconitate 2-methyltransferase (256 aa).

This sequence belongs to the methyltransferase superfamily. Tam family.

The protein localises to the cytoplasm. The enzyme catalyses trans-aconitate + S-adenosyl-L-methionine = (E)-3-(methoxycarbonyl)pent-2-enedioate + S-adenosyl-L-homocysteine. Catalyzes the S-adenosylmethionine monomethyl esterification of trans-aconitate. This is Trans-aconitate 2-methyltransferase from Rhizobium etli (strain ATCC 51251 / DSM 11541 / JCM 21823 / NBRC 15573 / CFN 42).